The following is a 698-amino-acid chain: Serine/threonine-protein kinase Nek8 (698 aa).

The Protein kinase domain occupies 4–258; sequence YERIRVVGRG…LSHIMAQPLC (255 aa). ATP is bound by residues 10–18 and Lys33; that span reads VGRGAFGIV. Asp128 (proton acceptor) is an active-site residue. At Thr162 the chain carries Phosphothreonine; by autocatalysis. Positions 281–307 are disordered; sequence LTPGTPMAPGSTGSRATSARCRGVPRG. RCC1 repeat units lie at residues 415–466, 467–518, 520–571, 585–636, and 638–689; these read RGII…ALSA, DGEL…ILTS, GRVL…TLLC, SGAC…AIGA, and GEVY…LAVR.

It belongs to the protein kinase superfamily. NEK Ser/Thr protein kinase family. NIMA subfamily. As to quaternary structure, interacts with PKD2; may regulate PKD2 targeting to the cilium. Interacts with ANKS6. Component of a complex containing at least ANKS6, INVS, NEK8 and NPHP3. ANKS6 may organize complex assembly by linking INVS and NPHP3 to NEK8 and INVS may target it to the proximal ciliary axoneme. Interacts with ANKS3. The cofactor is Mg(2+).

It is found in the cytoplasm. The protein localises to the cytoskeleton. Its subcellular location is the cell projection. The protein resides in the cilium. It localises to the cilium axoneme. It is found in the microtubule organizing center. The protein localises to the centrosome. It catalyses the reaction L-seryl-[protein] + ATP = O-phospho-L-seryl-[protein] + ADP + H(+). It carries out the reaction L-threonyl-[protein] + ATP = O-phospho-L-threonyl-[protein] + ADP + H(+). Its function is as follows. Required for renal tubular integrity. May regulate local cytoskeletal structure in kidney tubule epithelial cells. May regulate ciliary biogenesis through targeting of proteins to the cilia. Plays a role in organogenesis and is involved in the regulation of the Hippo signaling pathway. This chain is Serine/threonine-protein kinase Nek8 (Nek8), found in Rattus norvegicus (Rat).